A 250-amino-acid chain; its full sequence is Small ribosomal subunit protein uS2 (250 aa).

Belongs to the universal ribosomal protein uS2 family.

The sequence is that of Small ribosomal subunit protein uS2 from Chloroherpeton thalassium (strain ATCC 35110 / GB-78).